A 777-amino-acid chain; its full sequence is Gliding motility regulatory protein (777 aa).

The HPt domain maps to 1-108 (MDTEALKKSL…SDLNEDLSGA (108 aa)). Histidine 49 carries the phosphohistidine; by autocatalysis modification. Disordered regions lie at residues 129 to 149 (TPPAIAGARPVAPPPAPPPAP) and 164 to 212 (PAPV…KSAV). Composition is skewed to pro residues over residues 139 to 149 (VAPPPAPPPAP) and 164 to 177 (PAPVQAPVAPPPTQ). The segment covering 178 to 197 (APVAEPGAHAAAAAPHPAAA) has biased composition (low complexity). Positions 270 to 509 (DISNEVREQL…TITLRLPQSL (240 aa)) constitute a Histidine kinase domain. A CheW-like domain is found at 511–645 (LMKVLLVRLG…VPDIMAEVRR (135 aa)). Residues 660–776 (RVLLVDDSPI…EVLAQAIDRL (117 aa)) form the Response regulatory domain. Residue aspartate 709 is modified to 4-aspartylphosphate.

The enzyme catalyses ATP + protein L-histidine = ADP + protein N-phospho-L-histidine.. In terms of biological role, frzE is involved in a sensory transduction pathway that controls the frequency at which cells reverse their gliding direction. FrzE seems to be capable of autophosphorylating itself on a histidine residue and then to transfer that group to an aspartate residue in the C-terminal part of the protein. The polypeptide is Gliding motility regulatory protein (frzE) (Myxococcus xanthus).